The following is a 90-amino-acid chain: Small ribosomal subunit protein bS18 (90 aa).

It belongs to the bacterial ribosomal protein bS18 family. As to quaternary structure, part of the 30S ribosomal subunit. Forms a tight heterodimer with protein bS6.

In terms of biological role, binds as a heterodimer with protein bS6 to the central domain of the 16S rRNA, where it helps stabilize the platform of the 30S subunit. In Bacteroides fragilis (strain YCH46), this protein is Small ribosomal subunit protein bS18.